Here is a 205-residue protein sequence, read N- to C-terminus: Holliday junction branch migration complex subunit RuvA (205 aa).

The tract at residues 1 to 64 (MIGKLKGLID…EDQIKLFGFR (64 aa)) is domain I. The segment at 65 to 143 (SDVEREWFRL…AFADVDPGVI (79 aa)) is domain II. Positions 144 to 154 (RLSGAIEDSRA) are flexible linker. The tract at residues 154–205 (APQPIADAISALINLGYGQPQAAAAIAAASRAAGDKAETAQLIRLGLKELAK) is domain III.

This sequence belongs to the RuvA family. Homotetramer. Forms an RuvA(8)-RuvB(12)-Holliday junction (HJ) complex. HJ DNA is sandwiched between 2 RuvA tetramers; dsDNA enters through RuvA and exits via RuvB. An RuvB hexamer assembles on each DNA strand where it exits the tetramer. Each RuvB hexamer is contacted by two RuvA subunits (via domain III) on 2 adjacent RuvB subunits; this complex drives branch migration. In the full resolvosome a probable DNA-RuvA(4)-RuvB(12)-RuvC(2) complex forms which resolves the HJ.

The protein resides in the cytoplasm. In terms of biological role, the RuvA-RuvB-RuvC complex processes Holliday junction (HJ) DNA during genetic recombination and DNA repair, while the RuvA-RuvB complex plays an important role in the rescue of blocked DNA replication forks via replication fork reversal (RFR). RuvA specifically binds to HJ cruciform DNA, conferring on it an open structure. The RuvB hexamer acts as an ATP-dependent pump, pulling dsDNA into and through the RuvAB complex. HJ branch migration allows RuvC to scan DNA until it finds its consensus sequence, where it cleaves and resolves the cruciform DNA. The chain is Holliday junction branch migration complex subunit RuvA from Bradyrhizobium sp. (strain BTAi1 / ATCC BAA-1182).